The following is a 256-amino-acid chain: Myeloblastin (256 aa).

The N-terminal stretch at 1-25 (MAHRPPSPALASVLLALLLSGAARA) is a signal peptide. The propeptide occupies 26 to 27 (AE). Residues 28–248 (IVGGHEAQPH…YVDWIRSTLR (221 aa)) form the Peptidase S1 domain. Cys-56 and Cys-72 are joined by a disulfide. Active-site charge relay system residues include His-71 and Asp-118. Asn-129 and Asn-174 each carry an N-linked (GlcNAc...) asparagine glycan. Disulfide bonds link Cys-152-Cys-209, Cys-182-Cys-188, and Cys-199-Cys-224. Ser-203 functions as the Charge relay system in the catalytic mechanism. Residues 249 to 256 (RVEAKGRP) constitute a propeptide that is removed on maturation.

The protein belongs to the peptidase S1 family. Elastase subfamily. May form dimers. Interacts with CD177; the interaction tethers PRTN3 to the cell surface; the interaction is direct. Interacts with SERPINB1. Interacts with ADGRG3. In terms of tissue distribution, expressed in polymorphonuclear leukocytes (at protein level). Expressed in neutrophils (at protein level). Expressed in differentiating neutrophils.

Its subcellular location is the cytoplasmic granule. It is found in the secreted. It localises to the cell membrane. The protein localises to the membrane raft. The catalysed reaction is Hydrolysis of proteins, including elastin, by preferential cleavage: -Ala-|-Xaa- &gt; -Val-|-Xaa-.. With respect to regulation, inhibited by phenylmethanesulfonyl fluoride (PMSF) and diisopropyl fluorophosphate (DFP). In terms of biological role, serine protease that degrades elastin, fibronectin, laminin, vitronectin, and collagen types I, III, and IV (in vitro). By cleaving and activating receptor F2RL1/PAR-2, enhances endothelial cell barrier function and thus vascular integrity during neutrophil transendothelial migration. Plays a role in neutrophil transendothelial migration, probably when associated with CD177. Triggers inflammatory processes in neutrophils by interacting with ADGRG3 upstream of F2RL1/PAR2 activation. In Homo sapiens (Human), this protein is Myeloblastin (PRTN3).